We begin with the raw amino-acid sequence, 130 residues long: UPF0251 protein MmarC5_0986 (130 aa).

Belongs to the UPF0251 family.

The sequence is that of UPF0251 protein MmarC5_0986 from Methanococcus maripaludis (strain C5 / ATCC BAA-1333).